The sequence spans 434 residues: Alpha-enolase (434 aa).

Ser40 contacts Mg(2+). Residues His158 and Glu167 each coordinate substrate. Glu210 (proton donor) is an active-site residue. Mg(2+) contacts are provided by Asp245, Glu293, and Asp318. Substrate-binding residues include Glu293 and Asp318. The active-site Proton acceptor is the Lys343. Residues 370–373 and Lys394 each bind substrate; that span reads SHRS.

The protein belongs to the enolase family. As to quaternary structure, homodimer. It depends on Mg(2+) as a cofactor.

The protein resides in the cytoplasm. The enzyme catalyses (2R)-2-phosphoglycerate = phosphoenolpyruvate + H2O. It participates in carbohydrate degradation; glycolysis; pyruvate from D-glyceraldehyde 3-phosphate: step 4/5. The protein is Alpha-enolase (eno1) of Xenopus laevis (African clawed frog).